Here is a 494-residue protein sequence, read N- to C-terminus: Aspartyl/glutamyl-tRNA(Asn/Gln) amidotransferase subunit B (494 aa).

Residues 475–494 (TSGRADPKATNQMLAKKLKG) form a disordered region.

This sequence belongs to the GatB/GatE family. GatB subfamily. In terms of assembly, heterotrimer of A, B and C subunits.

The enzyme catalyses L-glutamyl-tRNA(Gln) + L-glutamine + ATP + H2O = L-glutaminyl-tRNA(Gln) + L-glutamate + ADP + phosphate + H(+). It catalyses the reaction L-aspartyl-tRNA(Asn) + L-glutamine + ATP + H2O = L-asparaginyl-tRNA(Asn) + L-glutamate + ADP + phosphate + 2 H(+). In terms of biological role, allows the formation of correctly charged Asn-tRNA(Asn) or Gln-tRNA(Gln) through the transamidation of misacylated Asp-tRNA(Asn) or Glu-tRNA(Gln) in organisms which lack either or both of asparaginyl-tRNA or glutaminyl-tRNA synthetases. The reaction takes place in the presence of glutamine and ATP through an activated phospho-Asp-tRNA(Asn) or phospho-Glu-tRNA(Gln). This chain is Aspartyl/glutamyl-tRNA(Asn/Gln) amidotransferase subunit B, found in Acaryochloris marina (strain MBIC 11017).